We begin with the raw amino-acid sequence, 1036 residues long: Multidrug resistance protein MdtC (1036 aa).

10 helical membrane passes run 12-34 (VATT…LLPV), 336-353 (RALV…FLFL), 360-382 (LIPA…LCGF), 431-450 (VGFT…IPLL), 463-485 (FAIT…TPMM), 528-547 (WVLL…YINI), 853-875 (LFLI…ESYI), 895-917 (LELF…IGIV), 949-971 (LRFR…LVLS), and 986-1008 (IVGG…YLCF).

It belongs to the resistance-nodulation-cell division (RND) (TC 2.A.6) family. MdtC subfamily. As to quaternary structure, part of a tripartite efflux system composed of MdtA, MdtB and MdtC. MdtC forms a heteromultimer with MdtB.

Its subcellular location is the cell inner membrane. The sequence is that of Multidrug resistance protein MdtC from Photorhabdus laumondii subsp. laumondii (strain DSM 15139 / CIP 105565 / TT01) (Photorhabdus luminescens subsp. laumondii).